The primary structure comprises 150 residues: Viral late gene transcription factor 2 (150 aa).

It belongs to the chordopoxvirinae VLTF-2 family. As to quaternary structure, interacts with itself. Interacts with the late transcription factors VLTF-1.

Its function is as follows. Acts with RNA polymerase to initiate transcription from late gene promoters. The sequence is that of Viral late gene transcription factor 2 (VLTF2) from Homo sapiens (Human).